The sequence spans 601 residues: MSSGYSSAPSVSHTSSDTDLNRIDSYDDGAEETTDEQRMCGLSELVTSCLTSSRLKAIDEEDEEENCNDIEIVGLSKTTTKVKRSKKVLSCPIVSSSTKKENGNAAPFLKSSQFTDVPPTIRFYTKGTKVTKPARKIQARLTWCHNSLLPIVMRQTLAASHFTVVDESLFYVGYWGRHLKSAQYRALQPHQKVNHFPGAFHIGRKDRLWMHIRKQQERFEGEFDIMPFTYILPTDRQELLKYLETDASRHVIVKPPASARGTGISVTRKPKDFPTTATLVAQHYIERPLTINRAKFDLRLYAYVPTFEPLRVYIYDQGLVRFASVPYSHSVSTISNKYMHLTNYSINKLAEADGVANKPVPKWTLHHLWEHFDEMGVDREKIQREIEEVIIKAFISTEKPIREHMSRFLEQEFICYELFGIDIILDEDYKPWLLEVNISPSLHSGTPLDVSVKAPLAKDVLNLAGVYVPPSFDKLSDADYSTRPRNGRKNREQLIKEASWVAAYKDQLGVIDNRIFKRLTPEDTRALVEFEDELERIGDFKLVFPTAHTSHYQKYFAETIYMNILLQQWQIAQEDDRSIGINRLEQLCRQKHMQSDQETSF.

Polar residues predominate over residues 1–18; the sequence is MSSGYSSAPSVSHTSSDT. Positions 1-37 are disordered; it reads MSSGYSSAPSVSHTSSDTDLNRIDSYDDGAEETTDEQ. Positions 138–476 constitute a TTL domain; sequence QARLTWCHNS…YVPPSFDKLS (339 aa). ATP-binding positions include lysine 254, 260 to 261, 282 to 285, and 295 to 297; these read RG, QHYI, and KFD. Arginine 260 lines the a protein pocket. An L-glutamate-binding site is contributed by arginine 321. An ATP-binding site is contributed by 342–343; sequence TN. L-glutamate contacts are provided by tyrosine 344, serine 345, and lysine 362. Residues aspartate 422, glutamate 435, and asparagine 437 each contribute to the Mg(2+) site. L-glutamate is bound at residue lysine 453.

This sequence belongs to the tubulin--tyrosine ligase family. Requires Mg(2+) as cofactor. In terms of tissue distribution, expressed in many sensory neurons in amphid.

The catalysed reaction is L-glutamyl-[protein] + L-glutamate + ATP = gamma-L-glutamyl-L-glutamyl-[protein] + ADP + phosphate + H(+). Monoglutamylase which modifies tubulin, adding a single glutamate on the gamma-carboxyl group of specific glutamate residues of target proteins. Involved in the side-chain initiation step of the polyglutamylation reaction but not in the elongation step. Preferentially modifies beta-tail tubulin over the alpha-tubulin. Involved in side-chain glutamylation of tubulin in sensory cilia. Together with ttll-5 and ttll-11, required for male mating. This Caenorhabditis elegans protein is Tubulin polyglutamylase ttll-4.